Reading from the N-terminus, the 276-residue chain is NAD kinase (276 aa).

The Proton acceptor role is filled by aspartate 67. NAD(+)-binding positions include 67 to 68 (DG), arginine 72, 136 to 137 (ND), lysine 147, arginine 164, aspartate 166, 177 to 182 (TAYALS), alanine 201, and glutamine 235.

It belongs to the NAD kinase family. The cofactor is a divalent metal cation.

It localises to the cytoplasm. It carries out the reaction NAD(+) + ATP = ADP + NADP(+) + H(+). Its function is as follows. Involved in the regulation of the intracellular balance of NAD and NADP, and is a key enzyme in the biosynthesis of NADP. Catalyzes specifically the phosphorylation on 2'-hydroxyl of the adenosine moiety of NAD to yield NADP. This is NAD kinase from Thermococcus sibiricus (strain DSM 12597 / MM 739).